We begin with the raw amino-acid sequence, 366 residues long: tRNA-specific 2-thiouridylase MnmA (366 aa).

ATP-binding positions include 10–17 (GLSGGVDS) and Ile-36. The Nucleophile role is filled by Cys-98. Cys-98 and Cys-194 are disulfide-bonded. Position 122 (Gly-122) interacts with ATP. Residues 144-146 (KDQ) are interaction with tRNA. Residue Cys-194 is the Cysteine persulfide intermediate of the active site. The interaction with tRNA stretch occupies residues 303 to 304 (RY).

It belongs to the MnmA/TRMU family.

The protein localises to the cytoplasm. It carries out the reaction S-sulfanyl-L-cysteinyl-[protein] + uridine(34) in tRNA + AH2 + ATP = 2-thiouridine(34) in tRNA + L-cysteinyl-[protein] + A + AMP + diphosphate + H(+). Functionally, catalyzes the 2-thiolation of uridine at the wobble position (U34) of tRNA, leading to the formation of s(2)U34. The polypeptide is tRNA-specific 2-thiouridylase MnmA (Chlorobaculum tepidum (strain ATCC 49652 / DSM 12025 / NBRC 103806 / TLS) (Chlorobium tepidum)).